A 285-amino-acid chain; its full sequence is Troponin T, cardiac muscle (285 aa).

Over residues 1-58 (MSDVEEAVEEYEEQEEAAEEEHEEAVEEEAGGEAEAGEPCTAEDGEEEEGREAEDGPV) the composition is skewed to acidic residues. Disordered regions lie at residues 1 to 83 (MSDV…GERV) and 111 to 206 (RKKE…EKKK). The residue at position 2 (Ser2) is an N-acetylserine. At Ser2 the chain carries Phosphoserine; by CK2. Over residues 66-77 (RPFMPNLVPPKI) the composition is skewed to pro residues. Composition is skewed to basic and acidic residues over residues 111–171 (RKKE…DEAR) and 190–206 (QTER…EKKK). At Thr191 the chain carries Phosphothreonine; by PKC/PRKCA. Phosphoserine; by PKC/PRKCA is present on Ser195. Phosphothreonine; by PKC/PRKCA and RAF1 is present on Thr200. At Thr281 the chain carries Phosphothreonine; by PKC/PRKCA.

Belongs to the troponin T family. The N-terminus is blocked. In terms of processing, phosphorylation at Thr-200 by PRKCA induces significant reduction in myofilament calcium sensitivity and actomyosin ATPase activity.

In terms of biological role, troponin T is the tropomyosin-binding subunit of troponin, the thin filament regulatory complex which confers calcium-sensitivity to striated muscle actomyosin ATPase activity. This chain is Troponin T, cardiac muscle (TNNT2), found in Bos taurus (Bovine).